The following is a 231-amino-acid chain: Homeobox protein engrailed-1a (231 aa).

3 disordered regions span residues 1–29 (MEDQRRGQGEEEDDSGSLPSPPLLPAHRN), 43–105 (GCKR…KDSQ), and 121–148 (DRPSSGPRTRKLKKKNNNTESDDKRPRT). Residues 43–56 (GCKRERERVTRDSG) show a composition bias toward basic and acidic residues. A compositionally biased stretch (low complexity) spans 68-102 (DGVSSSASSTVSSPVSSRQSNKVEQGSSKSSSPSK). A DNA-binding region (homeobox) is located at residues 143–202 (DKRPRTAFTAEQLQRLKAEFQTSRYITEQRRQALARELGLNESQIKIWFQNKRAKIKKSS).

Belongs to the engrailed homeobox family.

It is found in the nucleus. This chain is Homeobox protein engrailed-1a (eng1a), found in Danio rerio (Zebrafish).